The following is a 610-amino-acid chain: Methionine--tRNA ligase (610 aa).

The short motif at P12–H22 is the 'HIGH' region element. The Zn(2+) site is built by C144, C147, C157, and C160. A 'KMSKS' region motif is present at residues K348 to S352. ATP is bound at residue S351.

This sequence belongs to the class-I aminoacyl-tRNA synthetase family. MetG type 1 subfamily. As to quaternary structure, monomer. Zn(2+) is required as a cofactor.

It is found in the cytoplasm. It carries out the reaction tRNA(Met) + L-methionine + ATP = L-methionyl-tRNA(Met) + AMP + diphosphate. Is required not only for elongation of protein synthesis but also for the initiation of all mRNA translation through initiator tRNA(fMet) aminoacylation. This Corynebacterium diphtheriae (strain ATCC 700971 / NCTC 13129 / Biotype gravis) protein is Methionine--tRNA ligase.